Consider the following 316-residue polypeptide: Putative metal-binding protein TP_0034 (316 aa).

The N-terminal stretch at 1–19 is a signal peptide; sequence MQRCSVVAALAGVVFLAQA. Positions 68, 146, and 210 each coordinate a divalent metal cation.

The protein belongs to the bacterial solute-binding protein 9 family.

Its subcellular location is the periplasm. Functionally, part of an ATP-binding cassette (ABC) transport system involved in metal import. Binds a metal with high affinity and specificity and delivers it to the membrane permease for translocation into the cytoplasm. The chain is Putative metal-binding protein TP_0034 from Treponema pallidum (strain Nichols).